The sequence spans 189 residues: Protein GrpE (189 aa).

Positions 1-38 (MTKSNETERMEESEETHSSDIRSASESDHASGSDHTES) are enriched in basic and acidic residues. The segment at 1–54 (MTKSNETERMEESEETHSSDIRSASESDHASGSDHTESADEIPTADAEQGELEQ) is disordered.

The protein belongs to the GrpE family. Homodimer.

The protein localises to the cytoplasm. Its function is as follows. Participates actively in the response to hyperosmotic and heat shock by preventing the aggregation of stress-denatured proteins, in association with DnaK and GrpE. It is the nucleotide exchange factor for DnaK and may function as a thermosensor. Unfolded proteins bind initially to DnaJ; upon interaction with the DnaJ-bound protein, DnaK hydrolyzes its bound ATP, resulting in the formation of a stable complex. GrpE releases ADP from DnaK; ATP binding to DnaK triggers the release of the substrate protein, thus completing the reaction cycle. Several rounds of ATP-dependent interactions between DnaJ, DnaK and GrpE are required for fully efficient folding. This Tropheryma whipplei (strain Twist) (Whipple's bacillus) protein is Protein GrpE.